The chain runs to 286 residues: Myb family transcription factor PHL7 (286 aa).

Residues 12 to 72 (HASKQRLRWT…HLQKYRLAKY (61 aa)) enclose the HTH myb-type domain. The segment at residues 43-68 (PKGVLRVMGVQGLTIYHVKSHLQKYR) is a DNA-binding region (H-T-H motif). Residues 74-97 (PDSSSEGKKTDKKESGDMLSGLDG) are disordered. Residues 78–89 (SEGKKTDKKESG) show a composition bias toward basic and acidic residues. Residues 104-124 (TEALKLQMEVQKRLHEQLEVQ) adopt a coiled-coil conformation. The LHEQLE motif lies at 117–122 (LHEQLE). Residues 152 to 227 (LGEPSAPVTG…TGEERLSKKP (76 aa)) form a disordered region.

This sequence belongs to the MYB-CC family.

It is found in the nucleus. The chain is Myb family transcription factor PHL7 from Arabidopsis thaliana (Mouse-ear cress).